Reading from the N-terminus, the 394-residue chain is Elongation factor Tu (394 aa).

The region spanning 10–204 (KPHVNVGTIG…ALDNYIPEPE (195 aa)) is the tr-type G domain. The tract at residues 19–26 (GHVDHGKT) is G1. 19–26 (GHVDHGKT) provides a ligand contact to GTP. T26 provides a ligand contact to Mg(2+). Residues 60–64 (GITIS) are G2. The G3 stretch occupies residues 81–84 (DCPG). GTP-binding positions include 81–85 (DCPGH) and 136–139 (NKCD). Residues 136–139 (NKCD) form a G4 region. The tract at residues 174–176 (SAL) is G5.

It belongs to the TRAFAC class translation factor GTPase superfamily. Classic translation factor GTPase family. EF-Tu/EF-1A subfamily. As to quaternary structure, monomer.

Its subcellular location is the cytoplasm. It carries out the reaction GTP + H2O = GDP + phosphate + H(+). GTP hydrolase that promotes the GTP-dependent binding of aminoacyl-tRNA to the A-site of ribosomes during protein biosynthesis. The chain is Elongation factor Tu from Idiomarina loihiensis (strain ATCC BAA-735 / DSM 15497 / L2-TR).